The following is a 593-amino-acid chain: ATP-dependent lipid A-core flippase (593 aa).

6 helical membrane passes run 33-55 (YIFLSADASMIYLINPILNYGFG), 67-87 (ILMLMGVGMVGFIALRSVGSF), 146-166 (AIITVVQDGTFVIGLIVVMFV), 169-189 (WQLSLFLIVVGPFLGLFISII), 258-278 (VIQIIASLVLAFSLFTIAIFG), and 284-304 (GSSWLTAGSFASFFAAAAAIL). The 282-residue stretch at 38-319 (ADASMIYLIN…LTKVNVVIQK (282 aa)) folds into the ABC transmembrane type-1 domain. The 235-residue stretch at 351 to 585 (VTIKDLSFAF…GGLYTGSINR (235 aa)) folds into the ABC transporter domain. 383–390 (GKSGSGKT) provides a ligand contact to ATP.

This sequence belongs to the ABC transporter superfamily. Lipid exporter (TC 3.A.1.106) family. Homodimer.

The protein resides in the cell membrane. The catalysed reaction is ATP + H2O + lipid A-core oligosaccharideSide 1 = ADP + phosphate + lipid A-core oligosaccharideSide 2.. Functionally, involved in lipopolysaccharide (LPS) biosynthesis. Translocates lipid A-core from the inner to the outer leaflet of the inner membrane. Transmembrane domains (TMD) form a pore in the inner membrane and the ATP-binding domain (NBD) is responsible for energy generation. This Francisella novicida protein is ATP-dependent lipid A-core flippase.